Here is a 269-residue protein sequence, read N- to C-terminus: Putative 6-phosphogluconolactonase (269 aa).

Residues D248–G269 are disordered.

This sequence belongs to the glucosamine/galactosamine-6-phosphate isomerase family. 6-phosphogluconolactonase subfamily.

It localises to the nucleus. It carries out the reaction 6-phospho-D-glucono-1,5-lactone + H2O = 6-phospho-D-gluconate + H(+). Its pathway is carbohydrate degradation; pentose phosphate pathway; D-ribulose 5-phosphate from D-glucose 6-phosphate (oxidative stage): step 2/3. Its function is as follows. Hydrolysis of 6-phosphogluconolactone to 6-phosphogluconate. The chain is Putative 6-phosphogluconolactonase from Caenorhabditis elegans.